The sequence spans 334 residues: Protein-methionine-sulfoxide reductase catalytic subunit MsrP (334 aa).

The segment at residues Met-1–Ala-44 is a signal peptide (tat-type signal). Residues Asn-88, Tyr-91 to Glu-92, Cys-146, Thr-181, Asn-233, Arg-238, and Gly-249 to Lys-251 contribute to the Mo-molybdopterin site.

Belongs to the MsrP family. Heterodimer of a catalytic subunit (MsrP) and a heme-binding subunit (MsrQ). It depends on Mo-molybdopterin as a cofactor. Predicted to be exported by the Tat system. The position of the signal peptide cleavage has not been experimentally proven.

It localises to the periplasm. It catalyses the reaction L-methionyl-[protein] + a quinone + H2O = L-methionyl-(S)-S-oxide-[protein] + a quinol. The enzyme catalyses L-methionyl-[protein] + a quinone + H2O = L-methionyl-(R)-S-oxide-[protein] + a quinol. Its function is as follows. Part of the MsrPQ system that repairs oxidized periplasmic proteins containing methionine sulfoxide residues (Met-O), using respiratory chain electrons. Thus protects these proteins from oxidative-stress damage caused by reactive species of oxygen and chlorine generated by the host defense mechanisms. MsrPQ is essential for the maintenance of envelope integrity under bleach stress, rescuing a wide series of structurally unrelated periplasmic proteins from methionine oxidation, including the primary periplasmic chaperone SurA and the lipoprotein Pal. The catalytic subunit MsrP is non-stereospecific, being able to reduce both (R-) and (S-) diastereoisomers of methionine sulfoxide. This Escherichia coli O127:H6 (strain E2348/69 / EPEC) protein is Protein-methionine-sulfoxide reductase catalytic subunit MsrP.